A 374-amino-acid chain; its full sequence is Flagellar P-ring protein 1 (374 aa).

An N-terminal signal peptide occupies residues 1–26 (MVPNLMVIKKHLIGLLLILCPLSLQA).

This sequence belongs to the FlgI family. As to quaternary structure, the basal body constitutes a major portion of the flagellar organelle and consists of four rings (L,P,S, and M) mounted on a central rod.

It is found in the periplasm. The protein localises to the bacterial flagellum basal body. Assembles around the rod to form the L-ring and probably protects the motor/basal body from shearing forces during rotation. In Photobacterium profundum (strain SS9), this protein is Flagellar P-ring protein 1.